A 418-amino-acid chain; its full sequence is Histidine--tRNA ligase (418 aa).

The protein belongs to the class-II aminoacyl-tRNA synthetase family. In terms of assembly, homodimer.

Its subcellular location is the cytoplasm. It catalyses the reaction tRNA(His) + L-histidine + ATP = L-histidyl-tRNA(His) + AMP + diphosphate + H(+). This is Histidine--tRNA ligase from Thermoanaerobacter sp. (strain X514).